The primary structure comprises 285 residues: Non-homologous end joining protein Ku (285 aa).

In terms of domain architecture, Ku spans 9-176 (ISFGLVNVPV…PAEIRHLEAS (168 aa)). The interval 250 to 285 (AMTDQKKQQNTAESETEEKPTKSTLTPRGRRKVKGA) is disordered.

This sequence belongs to the prokaryotic Ku family. As to quaternary structure, homodimer. Interacts with LigD.

With LigD forms a non-homologous end joining (NHEJ) DNA repair enzyme, which repairs dsDNA breaks with reduced fidelity. Binds linear dsDNA with 5'- and 3'- overhangs but not closed circular dsDNA nor ssDNA. Recruits and stimulates the ligase activity of LigD. The polypeptide is Non-homologous end joining protein Ku (Desulfitobacterium hafniense (strain DSM 10664 / DCB-2)).